The following is a 268-amino-acid chain: tRNA (guanine-N(1)-)-methyltransferase (268 aa).

S-adenosyl-L-methionine contacts are provided by residues Gly-113 and 133–138 (IGDYVL). Residues 238–268 (RCPPDPFAHQGPVYEGDQLERPEGGEQGASR) form a disordered region.

It belongs to the RNA methyltransferase TrmD family. As to quaternary structure, homodimer.

Its subcellular location is the cytoplasm. It carries out the reaction guanosine(37) in tRNA + S-adenosyl-L-methionine = N(1)-methylguanosine(37) in tRNA + S-adenosyl-L-homocysteine + H(+). Its function is as follows. Specifically methylates guanosine-37 in various tRNAs. The sequence is that of tRNA (guanine-N(1)-)-methyltransferase from Thermomicrobium roseum (strain ATCC 27502 / DSM 5159 / P-2).